The primary structure comprises 339 residues: Transcription initiation factor IIB (339 aa).

Residues 39–70 (EELICPMCGSKNIIKDYERAEIVCETCGCVLQ) form a TFIIB-type zinc finger. The Zn(2+) site is built by cysteine 43, cysteine 46, cysteine 62, and cysteine 65. 2 repeat units span residues 156-239 (SELD…SREL) and 250-331 (DYVP…ELTE).

It belongs to the TFIIB family.

In terms of biological role, stabilizes TBP binding to an archaeal box-A promoter. Also responsible for recruiting RNA polymerase II to the pre-initiation complex (DNA-TBP-TFIIB). The sequence is that of Transcription initiation factor IIB from Methanothermococcus thermolithotrophicus (Methanococcus thermolithotrophicus).